Here is a 187-residue protein sequence, read N- to C-terminus: Adenine phosphoribosyltransferase (187 aa).

The protein belongs to the purine/pyrimidine phosphoribosyltransferase family. Homodimer.

The protein localises to the cytoplasm. The catalysed reaction is AMP + diphosphate = 5-phospho-alpha-D-ribose 1-diphosphate + adenine. It participates in purine metabolism; AMP biosynthesis via salvage pathway; AMP from adenine: step 1/1. Catalyzes a salvage reaction resulting in the formation of AMP, that is energically less costly than de novo synthesis. The polypeptide is Adenine phosphoribosyltransferase (Yersinia pestis (strain Pestoides F)).